A 489-amino-acid chain; its full sequence is Capsid protein (489 aa).

The interval 79–144 (GETSEEESDS…QPKTIPGQKQ (66 aa)) is disordered. The span at 81 to 94 (TSEEESDSGEEPEF) shows a compositional bias: acidic residues. Residues 95–110 (EQVRMDRTGGTEIPKE) are compositionally biased toward basic and acidic residues. Positions 122–125 (RKRK) match the Nuclear localization signal motif. A compositionally biased stretch (polar residues) spans 135–144 (QPKTIPGQKQ). Residues 412–429 (CRCWICNIEGHYANECPN) form a CCHC-type zinc finger. The interval 467–489 (EEEEETSTEESDGSSTSEDSDSD) is disordered.

The protein belongs to the caulimoviridae capsid protein family. Interacts (via nuclear localization signal) with host importin alpha.

Its subcellular location is the virion. It is found in the host nucleus. Self assembles to form an icosahedral capsid, about 50 nm in diameter, nm, composed of 420 subunits of the viral capsid protein. The capsid encapsulates the genomic dsDNA. Following virus entry into host cell, provides nuclear import of the viral genome. Virus particles do not enter the nucleus, but dock at the nuclear membrane through the interaction with host importins. The sequence is that of Capsid protein from Arabidopsis thaliana (Mouse-ear cress).